The sequence spans 131 residues: Small ribosomal subunit protein uS8 (131 aa).

It belongs to the universal ribosomal protein uS8 family. As to quaternary structure, part of the 30S ribosomal subunit. Contacts proteins S5 and S12.

In terms of biological role, one of the primary rRNA binding proteins, it binds directly to 16S rRNA central domain where it helps coordinate assembly of the platform of the 30S subunit. The polypeptide is Small ribosomal subunit protein uS8 (Malacoplasma penetrans (strain HF-2) (Mycoplasma penetrans)).